An 84-amino-acid chain; its full sequence is Gomesin (84 aa).

The signal sequence occupies residues 1–23 (MNRTRLFACLLLAVLILVHESNA). A Pyrrolidone carboxylic acid modification is found at Q24. Disulfide bonds link C25/C38 and C29/C34. An Arginine amide modification is found at R41. The propeptide occupies 42-84 (GKRSLDETNVGTSDVEKRAFDDSNVPSLVEERELEDEGSFIFD).

In terms of tissue distribution, in hemocytes only, but not in all hemocytes observed.

The protein resides in the secreted. Active against several Gram-positive bacteria such as Bacillus spp, Staphylococcus spp and E.faecalis, several Gram-negative bacteria such as E.coli, K.pneumoniae, P.aeruginosa and Salmonella spp, filamentous fungi such as N.crassa, T.viridae and yeasts such as C.albicans. It is active against the parasite L.amazonensis as well. It shows hemolytic activity. This Acanthoscurria gomesiana (Tarantula spider) protein is Gomesin.